The sequence spans 347 residues: uncharacterized protein (347 aa).

Coiled coils occupy residues 148–201 (DQQS…EKDG) and 261–298 (LENL…DTFS). Residues 151–203 (SISNLRKEEKEKQKENENENENENENENENEKENQELDKKVNQTNDNEKDGDE) form a disordered region. Residues 155-167 (LRKEEKEKQKENE) are compositionally biased toward basic and acidic residues. The span at 168–178 (NENENENENEN) shows a compositional bias: acidic residues. Residues 179–191 (ENEKENQELDKKV) are compositionally biased toward basic and acidic residues.

This is an uncharacterized protein from Dictyostelium discoideum (Social amoeba).